A 267-amino-acid chain; its full sequence is MPVFHFKDTLTAQDVALNYATFGQADRPALIFSNSLGTNLSMWQQQIAYFQDKYFVICYDTRGHGASSTPVGPYRIDQLGTDVIALLDHLQIPQATFCGISMGGLTGQWLAIHFPERFNQVIVANTAAKIGEAQAWQARAQLVREQGLTPIAQTAATRWFTPGFIEDSPEIVEKLSHDLAQGSAEGYASCCEALAEADVRPQLQRISIPVLVIAGAQDPVTTVADGQFLCEHIVHSTLEVLEASHISNVEQPQAFNHAVEAVMKRFN.

It catalyses the reaction (4,5-dihydro-5-oxofuran-2-yl)-acetate + H2O = 3-oxoadipate + H(+). It participates in aromatic compound metabolism; beta-ketoadipate pathway; 3-oxoadipate from 5-oxo-4,5-dihydro-2-furylacetate: step 1/1. This chain is 3-oxoadipate enol-lactonase 2 (catD), found in Acinetobacter baylyi (strain ATCC 33305 / BD413 / ADP1).